Reading from the N-terminus, the 374-residue chain is Putative glutamate--cysteine ligase 2 (374 aa).

Belongs to the glutamate--cysteine ligase type 2 family. YbdK subfamily.

The catalysed reaction is L-cysteine + L-glutamate + ATP = gamma-L-glutamyl-L-cysteine + ADP + phosphate + H(+). Its function is as follows. ATP-dependent carboxylate-amine ligase which exhibits weak glutamate--cysteine ligase activity. In Acidovorax ebreus (strain TPSY) (Diaphorobacter sp. (strain TPSY)), this protein is Putative glutamate--cysteine ligase 2.